A 585-amino-acid chain; its full sequence is MVCREQLSKNQVKWVFASITCVSAVAIAAIVLAITLRRPGCELEACSPDADMLDYLLSLGQISRRDALEVTWYHAANSKEAMTAALNSNITVLEADVNVEGLGTANETGVPIMAHPPAIYSDNTLEQWLDAVLGSSQKGIKLDFKNIKAVGPSLDLLRRLTEEGKVRRPIWINADILKGPNMLISTEVNATQFLALVREKYPKATLSPGWTTFYVSTSPNTTYTRAMVEKMHELVGGVPQRVTFPVRSSMVRAAWPHFSWLLSQSERYSLTLWQAASDPMSVEDLLYVRDNTAVHQVYYDIFEPLLSQFKQLALNATRKPMYYTGGSLIPLLQLPGDDGLNVEWLVPDVQGSGKTATMTLPDTEGMILLNTGLEGTVSENPVPIVHTPSGSILTLESCLQQLATHPGHWGIHLQIAEPAALRPSLALLARLSSLGLLHWPVWVGAKISHGSFSVPGHVAGRELLTAVAEVFPDVTVAPGWPEEVLGSGYREQLLTDMLELCQGLWQPVSFQMQAMLLGHSTAGAIARLLASSPRATVTVEYDPAGGDYASVRTALLAARAVDSTRVYYRLPQGYRKDLLADVGRN.

The helical transmembrane segment at 14 to 34 threads the bilayer; sequence WVFASITCVSAVAIAAIVLAI.

It belongs to the menorin family.

Its subcellular location is the membrane. The sequence is that of Protein FAM151A (FAM151A) from Pongo abelii (Sumatran orangutan).